Here is a 305-residue protein sequence, read N- to C-terminus: Serine/threonine-protein phosphatase 4 catalytic subunit (305 aa).

The Mn(2+) site is built by Asp52, His54, Asp80, and Asn112. His113 (proton donor) is an active-site residue. Positions 162 and 236 each coordinate Mn(2+).

It belongs to the PPP phosphatase family. PP-4 (PP-X) subfamily. Serine/threonine-protein phosphatase 4 (PP4) occurs in different assemblies of the catalytic and one or more regulatory subunits. Probably part of a PP4 complex containing ppp4c and ppp4r2. Interacts with smkA. Requires Mn(2+) as cofactor.

It is found in the cytoplasm. The protein resides in the nucleus. It carries out the reaction O-phospho-L-seryl-[protein] + H2O = L-seryl-[protein] + phosphate. It catalyses the reaction O-phospho-L-threonyl-[protein] + H2O = L-threonyl-[protein] + phosphate. In terms of biological role, required for development, chemotaxis and the expression of numerous genes. This chain is Serine/threonine-protein phosphatase 4 catalytic subunit (ppp4c), found in Dictyostelium discoideum (Social amoeba).